The primary structure comprises 387 residues: Deoxyguanosinetriphosphate triphosphohydrolase-like protein (387 aa).

The HD domain maps to 78–209 (RLTHSLEVAQ…ANLADEVAYN (132 aa)).

Belongs to the dGTPase family. Type 2 subfamily.

This chain is Deoxyguanosinetriphosphate triphosphohydrolase-like protein, found in Ralstonia nicotianae (strain ATCC BAA-1114 / GMI1000) (Ralstonia solanacearum).